A 164-amino-acid chain; its full sequence is tRNA (cytidine(34)-2'-O)-methyltransferase (164 aa).

S-adenosyl-L-methionine-binding residues include M80, G102, V124, and S132.

This sequence belongs to the class IV-like SAM-binding methyltransferase superfamily. RNA methyltransferase TrmH family. TrmL subfamily. As to quaternary structure, homodimer.

The protein localises to the cytoplasm. It catalyses the reaction cytidine(34) in tRNA + S-adenosyl-L-methionine = 2'-O-methylcytidine(34) in tRNA + S-adenosyl-L-homocysteine + H(+). The catalysed reaction is 5-carboxymethylaminomethyluridine(34) in tRNA(Leu) + S-adenosyl-L-methionine = 5-carboxymethylaminomethyl-2'-O-methyluridine(34) in tRNA(Leu) + S-adenosyl-L-homocysteine + H(+). Methylates the ribose at the nucleotide 34 wobble position in the two leucyl isoacceptors tRNA(Leu)(CmAA) and tRNA(Leu)(cmnm5UmAA). Catalyzes the methyl transfer from S-adenosyl-L-methionine to the 2'-OH of the wobble nucleotide. In Polaromonas sp. (strain JS666 / ATCC BAA-500), this protein is tRNA (cytidine(34)-2'-O)-methyltransferase.